A 111-amino-acid chain; its full sequence is Universal stress protein B (111 aa).

A run of 2 helical transmembrane segments spans residues 1–21 (MIST…NMAR) and 90–110 (FILT…LMIW).

This sequence belongs to the universal stress protein B family.

The protein localises to the cell inner membrane. This is Universal stress protein B from Escherichia coli O45:K1 (strain S88 / ExPEC).